The following is a 288-amino-acid chain: Executioner caspase (288 aa).

Residue C131 is part of the active site.

Belongs to the peptidase C14A family.

Functionally, may induce host cell apoptosis and contribute of the establishment of a special cell cleavage process in which apoppotic bodies are rescued by the virus and differentiate to form large vesicles in which virion assembles. In Spodoptera frugiperda ascovirus 1a (SfAV-1a), this protein is Executioner caspase.